The following is a 697-amino-acid chain: Elongation factor G (697 aa).

Residues 8–287 (ERVRNIGIAA…AVVDYLPAPT (280 aa)) enclose the tr-type G domain. GTP is bound by residues 17-24 (AHIDAGKT), 81-85 (DTPGH), and 135-138 (NKMD).

It belongs to the TRAFAC class translation factor GTPase superfamily. Classic translation factor GTPase family. EF-G/EF-2 subfamily.

Its subcellular location is the cytoplasm. In terms of biological role, catalyzes the GTP-dependent ribosomal translocation step during translation elongation. During this step, the ribosome changes from the pre-translocational (PRE) to the post-translocational (POST) state as the newly formed A-site-bound peptidyl-tRNA and P-site-bound deacylated tRNA move to the P and E sites, respectively. Catalyzes the coordinated movement of the two tRNA molecules, the mRNA and conformational changes in the ribosome. The sequence is that of Elongation factor G (fusA) from Arthrospira platensis (Spirulina platensis).